Reading from the N-terminus, the 330-residue chain is MAFLEDGNHTTVTEFFLLGLTDDPVLRDILFIIILCIYLVTVSGNLSTILLIRVSSQLHHPMYFILSHLASVDIGISSSVTPNMLATFLVKQNTISYIGCSIQFTSAAFFGTVECFLLATMAYDRFVAICNPLLYSTKMSTEACIQLVVGSYIQGFLNASFFTLSFFSLFFCGPNRINDFYCDFAPLLELSCSDVTVAVVITSISAGFITLTTVFVIAISYSCIFITIMKMHSTESRCKAFSTCTSHLTAVILFYGTAIFIYVMPKSSYSTDQNKVLSIFYTVVIPMLNPLIYSLRNNEIKEALKRHLGKKVFSYGNLFCKTHYNHNYPV.

Topologically, residues 1-28 (MAFLEDGNHTTVTEFFLLGLTDDPVLRD) are extracellular. Asparagine 8 carries an N-linked (GlcNAc...) asparagine glycan. Residues 29-49 (ILFIIILCIYLVTVSGNLSTI) form a helical membrane-spanning segment. Topologically, residues 50 to 57 (LLIRVSSQ) are cytoplasmic. A helical transmembrane segment spans residues 58–78 (LHHPMYFILSHLASVDIGISS). Topologically, residues 79–102 (SVTPNMLATFLVKQNTISYIGCSI) are extracellular. Cysteines 100 and 192 form a disulfide. A helical transmembrane segment spans residues 103 to 123 (QFTSAAFFGTVECFLLATMAY). At 124–136 (DRFVAICNPLLYS) the chain is on the cytoplasmic side. A helical membrane pass occupies residues 137 to 157 (TKMSTEACIQLVVGSYIQGFL). Over 158–199 (NASFFTLSFFSLFFCGPNRINDFYCDFAPLLELSCSDVTVAV) the chain is Extracellular. A helical membrane pass occupies residues 200 to 220 (VITSISAGFITLTTVFVIAIS). At 221 to 240 (YSCIFITIMKMHSTESRCKA) the chain is on the cytoplasmic side. A helical membrane pass occupies residues 241–261 (FSTCTSHLTAVILFYGTAIFI). Residues 262-274 (YVMPKSSYSTDQN) are Extracellular-facing. Residues 275-295 (KVLSIFYTVVIPMLNPLIYSL) traverse the membrane as a helical segment. Residues 296–330 (RNNEIKEALKRHLGKKVFSYGNLFCKTHYNHNYPV) are Cytoplasmic-facing.

It belongs to the G-protein coupled receptor 1 family.

The protein localises to the cell membrane. In terms of biological role, potential odorant receptor. The sequence is that of Olfactory receptor 5P73 from Mus musculus (Mouse).